Consider the following 430-residue polypeptide: Gamma-glutamyl phosphate reductase (430 aa).

The protein belongs to the gamma-glutamyl phosphate reductase family.

It is found in the cytoplasm. It carries out the reaction L-glutamate 5-semialdehyde + phosphate + NADP(+) = L-glutamyl 5-phosphate + NADPH + H(+). It functions in the pathway amino-acid biosynthesis; L-proline biosynthesis; L-glutamate 5-semialdehyde from L-glutamate: step 2/2. In terms of biological role, catalyzes the NADPH-dependent reduction of L-glutamate 5-phosphate into L-glutamate 5-semialdehyde and phosphate. The product spontaneously undergoes cyclization to form 1-pyrroline-5-carboxylate. The chain is Gamma-glutamyl phosphate reductase from Polaromonas naphthalenivorans (strain CJ2).